The sequence spans 62 residues: Large ribosomal subunit protein bL32 (62 aa).

Over residues 1–19 the composition is skewed to basic residues; sequence MPNPKRRHSKARTGNRRAH. A disordered region spans residues 1–23; it reads MPNPKRRHSKARTGNRRAHDHLS.

This sequence belongs to the bacterial ribosomal protein bL32 family.

The protein is Large ribosomal subunit protein bL32 of Koribacter versatilis (strain Ellin345).